We begin with the raw amino-acid sequence, 224 residues long: Urease accessory protein UreF (224 aa).

This sequence belongs to the UreF family. UreD, UreF and UreG form a complex that acts as a GTP-hydrolysis-dependent molecular chaperone, activating the urease apoprotein by helping to assemble the nickel containing metallocenter of UreC. The UreE protein probably delivers the nickel.

It is found in the cytoplasm. In terms of biological role, required for maturation of urease via the functional incorporation of the urease nickel metallocenter. The chain is Urease accessory protein UreF from Pseudomonas savastanoi pv. phaseolicola (strain 1448A / Race 6) (Pseudomonas syringae pv. phaseolicola (strain 1448A / Race 6)).